Reading from the N-terminus, the 390-residue chain is Cell adhesion molecule 4 (390 aa).

The N-terminal stretch at 1–27 (MAPALTALNRCFVLGILLLVTAGTAFS) is a signal peptide. An Ig-like V-type domain is found at 28 to 122 (QEVQAENVTV…DTHHQIATLT (95 aa)). The Extracellular portion of the chain corresponds to 28-326 (QEVQAENVTV…IEAQTQVPYA (299 aa)). N-linked (GlcNAc...) asparagine glycosylation is found at Asn34 and Asn70. Intrachain disulfides connect Cys47–Cys107, Cys148–Cys202, and Cys247–Cys293. Ig-like C2-type domains are found at residues 127–219 (PDNP…TQYE) and 226–309 (PTAS…YVLV). 2 N-linked (GlcNAc...) asparagine glycosylation sites follow: Asn264 and Asn288. The helical transmembrane segment at 327 to 347 (VIGGILALLVFLVICILIVMV) threads the bilayer. The Cytoplasmic portion of the chain corresponds to 348 to 390 (WCSVRQKGSYLTHEASGLDEHGEAREAFLNGGENHKRKEEFFI).

Belongs to the nectin family.

It is found in the membrane. In terms of biological role, involved in the cell-cell adhesion. This is Cell adhesion molecule 4 (cadm4) from Xenopus laevis (African clawed frog).